The chain runs to 254 residues: Alcohol dehydrogenase 1 (254 aa).

10-33 serves as a coordination point for NAD(+); the sequence is FVAGLGGIGLDTSREIVKSGPKNL. Residue S138 coordinates substrate. Y151 functions as the Proton acceptor in the catalytic mechanism.

It belongs to the short-chain dehydrogenases/reductases (SDR) family. As to quaternary structure, homodimer.

It carries out the reaction a primary alcohol + NAD(+) = an aldehyde + NADH + H(+). The catalysed reaction is a secondary alcohol + NAD(+) = a ketone + NADH + H(+). This Drosophila montana (Fruit fly) protein is Alcohol dehydrogenase 1 (Adh1).